Here is a 79-residue protein sequence, read N- to C-terminus: Small ribosomal subunit protein uS17 (79 aa).

The protein belongs to the universal ribosomal protein uS17 family. As to quaternary structure, part of the 30S ribosomal subunit.

Its function is as follows. One of the primary rRNA binding proteins, it binds specifically to the 5'-end of 16S ribosomal RNA. In Rhizobium etli (strain ATCC 51251 / DSM 11541 / JCM 21823 / NBRC 15573 / CFN 42), this protein is Small ribosomal subunit protein uS17.